A 635-amino-acid chain; its full sequence is Biosynthetic arginine decarboxylase (635 aa).

The residue at position 100 (K100) is an N6-(pyridoxal phosphate)lysine. 282–292 (VDIGGGLGVDY) contacts substrate.

The protein belongs to the Orn/Lys/Arg decarboxylase class-II family. SpeA subfamily. Mg(2+) serves as cofactor. Pyridoxal 5'-phosphate is required as a cofactor.

It catalyses the reaction L-arginine + H(+) = agmatine + CO2. Its pathway is amine and polyamine biosynthesis; agmatine biosynthesis; agmatine from L-arginine: step 1/1. Catalyzes the biosynthesis of agmatine from arginine. This chain is Biosynthetic arginine decarboxylase, found in Geobacter sulfurreducens (strain ATCC 51573 / DSM 12127 / PCA).